Consider the following 306-residue polypeptide: ADP,ATP carrier protein ER-ANT1 (306 aa).

Solcar repeat units lie at residues 8-101 (ERFS…FKNL), 113-205 (KWFA…IKPI), and 213-299 (GNFL…LHQI). 5 helical membrane-spanning segments follow: residues 10–37 (FSAD…VKLL), 78–102 (QANV…KNLL), 111–131 (YLKW…TTSL), 181–202 (FGVS…YDTI), and 216–236 (LASF…AYPF). Positions 83 and 95 each coordinate ADP. Residue Arg240 participates in ADP binding. The segment at 240–245 (RRRMML) is important for transport activity. A Nucleotide carrier signature motif motif is present at residues 240–245 (RRRMML). The chain crosses the membrane as a helical span at residues 276–296 (VTANMLLGVAGAGVLAGYDQL).

Belongs to the mitochondrial carrier (TC 2.A.29) family.

It localises to the endoplasmic reticulum membrane. It carries out the reaction ADP(in) + ATP(out) = ADP(out) + ATP(in). Functionally, ADP:ATP antiporter that catalyzes the exchange of ADP and ATP across the endoplasmic reticulum membrane. In Arabidopsis thaliana (Mouse-ear cress), this protein is ADP,ATP carrier protein ER-ANT1 (ER-ANT1).